We begin with the raw amino-acid sequence, 928 residues long: Putative replication origin binding protein (928 aa).

Residues 386–516 (NIVPPKGHIT…QVLRDILMTA (131 aa)) enclose the Helicase ATP-binding domain. 399 to 406 (ASLGTGKT) contributes to the ATP binding site. The DEAD box motif lies at 484–487 (DECD).

This sequence belongs to the herpesviridae oribp family.

Its function is as follows. Displays bipolar ssDNA and dsDNA unwinding activities that require the same core catalytic residues for unwinding in either direction, the 3'-5' direction being more robust. This Escherichia coli (Enterobacteria phage T5) protein is Putative replication origin binding protein.